The following is a 420-amino-acid chain: 3-isopropylmalate dehydratase large subunit (420 aa).

Cysteine 300, cysteine 361, and cysteine 364 together coordinate [4Fe-4S] cluster.

This sequence belongs to the aconitase/IPM isomerase family. LeuC type 2 subfamily. As to quaternary structure, heterodimer of LeuC and LeuD. The cofactor is [4Fe-4S] cluster.

The enzyme catalyses (2R,3S)-3-isopropylmalate = (2S)-2-isopropylmalate. It participates in amino-acid biosynthesis; L-leucine biosynthesis; L-leucine from 3-methyl-2-oxobutanoate: step 2/4. Its function is as follows. Catalyzes the isomerization between 2-isopropylmalate and 3-isopropylmalate, via the formation of 2-isopropylmaleate. This is 3-isopropylmalate dehydratase large subunit from Endomicrobium trichonymphae.